We begin with the raw amino-acid sequence, 266 residues long: Esterase AGAP003155 (266 aa).

Active-site charge relay system residues include Ser-114, Asp-172, and His-199. The segment at 231 to 266 (ATEENSFHLEGQEEAEESALQPVHEGLQNGSDSDSD) is disordered.

Belongs to the LovG family.

The polypeptide is Esterase AGAP003155 (Anopheles gambiae (African malaria mosquito)).